Here is a 380-residue protein sequence, read N- to C-terminus: Cytochrome b (380 aa).

The next 4 membrane-spanning stretches (helical) occupy residues 33–53 (FGSLLGMCLMIQILTGLFLAM), 77–98 (WLIRYLHANGASMFFICLFIHV), 113–133 (WNIGIVLLLTTMATAFVGYVL), and 178–198 (FFAFHFILPFIITALVLVHLL). Heme b contacts are provided by His83 and His97. Positions 182 and 196 each coordinate heme b. His201 lines the a ubiquinone pocket. 4 helical membrane-spanning segments follow: residues 226 to 246 (IKDLLGALILLMVLMILVLFF), 288 to 308 (LGGVLALILSILILATLPLLN), 320 to 340 (ITQALYWIFVANLLTXTWIGG), and 347 to 367 (FTLIGXIASXLXFXIIIIFMP).

The protein belongs to the cytochrome b family. As to quaternary structure, the cytochrome bc1 complex contains 11 subunits: 3 respiratory subunits (MT-CYB, CYC1 and UQCRFS1), 2 core proteins (UQCRC1 and UQCRC2) and 6 low-molecular weight proteins (UQCRH/QCR6, UQCRB/QCR7, UQCRQ/QCR8, UQCR10/QCR9, UQCR11/QCR10 and a cleavage product of UQCRFS1). This cytochrome bc1 complex then forms a dimer. The cofactor is heme b.

Its subcellular location is the mitochondrion inner membrane. Its function is as follows. Component of the ubiquinol-cytochrome c reductase complex (complex III or cytochrome b-c1 complex) that is part of the mitochondrial respiratory chain. The b-c1 complex mediates electron transfer from ubiquinol to cytochrome c. Contributes to the generation of a proton gradient across the mitochondrial membrane that is then used for ATP synthesis. The protein is Cytochrome b (MT-CYB) of Rhipidomys wetzeli (Wetzel's climbing mouse).